The chain runs to 361 residues: MLNEVLKGIEGLDNDMILKAKNRVDSLAKPLGSLGKLEDIAIRLSGITGNMFNNIDKKCVIIMSSDNGVEEEGVASAPQCVTLLQTKNFIKGTTGVATLAKSNGTDLMVFDVGINSDEVVEGVINRKISKGTKNIYKEPAMTYEEAKKSLEIGIEAVKIAKEKGYKILGVGEMGIGNTTTSAAVLKALIGCETSQVVGKGGGINNASFEKKKRIVEEVVKKHNINFDDPIDIISKVGGYDIGAMTGVFLGAAFYRIPVVIDGFISVVAALLANRLNPLVKEFCFTSHKSQEIGYELAIKELGLDPMLDLNMRLGEGSGCPIAFSVIDFATAMMNNMATFEEGNIDNSYLEDVKDEECYIVL.

Residue glutamate 315 is the Proton acceptor of the active site.

Belongs to the CobT family.

It carries out the reaction 5,6-dimethylbenzimidazole + nicotinate beta-D-ribonucleotide = alpha-ribazole 5'-phosphate + nicotinate + H(+). It participates in nucleoside biosynthesis; alpha-ribazole biosynthesis; alpha-ribazole from 5,6-dimethylbenzimidazole: step 1/2. Functionally, catalyzes the synthesis of alpha-ribazole-5'-phosphate from nicotinate mononucleotide (NAMN) and 5,6-dimethylbenzimidazole (DMB). This chain is Nicotinate-nucleotide--dimethylbenzimidazole phosphoribosyltransferase, found in Clostridium perfringens (strain ATCC 13124 / DSM 756 / JCM 1290 / NCIMB 6125 / NCTC 8237 / Type A).